The primary structure comprises 714 residues: Protein spire homolog 2 (714 aa).

The KIND domain maps to 22-203 (LSLEEVLKAY…RALFVETLEL (182 aa)). A disordered region spans residues 136–162 (DSEDSGCGAADEGYGGPEEEEEAEGVP). WH2 domains follow at residues 248 to 262 (QLMR…LKKV), 278 to 296 (PFEM…LRKV), and 342 to 359 (LHEK…LRPV). 4 positions are modified to phosphoserine: S371, S440, S442, and S476. The disordered stretch occupies residues 453 to 516 (VASGLQSATH…SSGDRPEASM (64 aa)). The span at 486–496 (DQGTCPASVSD) shows a compositional bias: polar residues. The spir-box stretch occupies residues 534 to 554 (LALTVEEVMDVRRVLVKAEME).

It belongs to the spire family.

Its subcellular location is the cytoplasm. The protein resides in the cytoskeleton. The protein localises to the cytosol. It localises to the cell membrane. It is found in the cytoplasmic vesicle membrane. In terms of biological role, acts as an actin nucleation factor, remains associated with the slow-growing pointed end of the new filament. Involved in intracellular vesicle transport along actin fibers, providing a novel link between actin cytoskeleton dynamics and intracellular transport. Required for asymmetric spindle positioning and asymmetric cell division during meiosis. Required for normal formation of the cleavage furrow and for polar body extrusion during female germ cell meiosis. Also acts in the nucleus: together with SPIRE1 and SPIRE2, promotes assembly of nuclear actin filaments in response to DNA damage in order to facilitate movement of chromatin and repair factors after DNA damage. The protein is Protein spire homolog 2 (SPIRE2) of Homo sapiens (Human).